We begin with the raw amino-acid sequence, 67 residues long: MNVTVMFLVLLLLTMPLTDGFNIRATNGGELFGPVQRDAGNVLDHGFQRRRDCPPWCPTSHCNAGTC.

Positions 1-20 are cleaved as a signal peptide; sequence MNVTVMFLVLLLLTMPLTDG. A propeptide spanning residues 21-48 is cleaved from the precursor; that stretch reads FNIRATNGGELFGPVQRDAGNVLDHGFQ.

The protein belongs to the conotoxin L superfamily. Post-translationally, contains 2 disulfide bonds. In terms of tissue distribution, expressed by the venom duct.

The protein resides in the secreted. Its function is as follows. Probable neurotoxin with unknown target. Possibly targets ion channels. This chain is Conotoxin Cal14.2c, found in Californiconus californicus (California cone).